The following is a 459-amino-acid chain: MMTEKLNSGHTNLTSKGIINDLQIAGNTSDDMGWKSKLKLPPKDNRFKTTDVTDTRGNEFEEFCLKRELLMGIFEKGWERPSPIQEAAIPIALSGKDVLARAKNGTGKTGAYCIPVLEQIDPTKDYIQALVMVPTRELALQTSQICIELAKHLDIRVMVTTGGTILKDDILRIYQKVQLIIATPGRILDLMDKKVADMSHCRILVLDEADKLLSLDFQGMLDHVILKLPKDPQILLFSATFPLTVKNFMEKHLREPYEINLMEELTLKGVTQYYAFVQERQKVHCLNTLFSKLQINQSIIFCNSTQRVELLAKKITELGYCCYYIHAKMAQAHRNRVFHDFRQGLCRNLVCSDLFTRGIDVQAVNVVINFDFPRMAETYLHRIGRSGRFGHLGIAINLITYEDRFDLHRIEKELGTEIKPIPKVIDPALYVANVGASVGDTCNNSDLNNSANEEGNVSK.

The segment at 1–267 (MMTEKLNSGH…EINLMEELTL (267 aa)) is recA-like domain 1. Serine 8 and serine 29 each carry phosphoserine. The Q motif motif lies at 58–86 (NEFEEFCLKRELLMGIFEKGWERPSPIQE). In terms of domain architecture, Helicase ATP-binding spans 89 to 259 (IPIALSGKDV…EKHLREPYEI (171 aa)). 102-109 (AKNGTGKT) provides a ligand contact to ATP. A DEAD box motif is present at residues 207–210 (DEAD). Residues 264 to 431 (ELTLKGVTQY…PKVIDPALYV (168 aa)) form a gyf binding region. The 161-residue stretch at 269 to 429 (GVTQYYAFVQ…PIPKVIDPAL (161 aa)) folds into the Helicase C-terminal domain. Positions 432-459 (ANVGASVGDTCNNSDLNNSANEEGNVSK) are recA-like domain 2. Serine 450 is modified (phosphoserine).

The protein belongs to the DEAD box helicase family. DDX6/DHH1 subfamily. In terms of assembly, conserved component of different types of multiprotein ribonucleoprotein complexes (RNPs) that form distinct germ granules (P-body, nuage, sponge body or polar granules) and P-body-like neuronal RNPs. Consequently it interacts with a wide variety of proteins, some of which appear to be common interactive partners in almost all RNPs types i.e. cup and tral, whereas other interactions are specific to a germ granule/RNP. Core functional components in me31B-containing RNPs include RNA regulatory proteins (such as translational repressor, RNA-decapping and exonuclease proteins), RNA localization proteins and additional proteins depending on the biological context of the RNPs. In the P-body RNPs, interacts with at least the translation repressor proteins tral, cup and Edc3, and the mRNA localization factor yps. Interaction with tral or Edc3 is required for translation repression and possibly RNA decapping; binding to tral and Edc3 is mutually exclusive. In the nuage and germ plasm polar granule RNPs, interacts with at least tral, cup, and additional proteins required for assembly and function of the germ granules such as tud, vas and aub. Interacts (when dimethylated on Arg residues) with tud; interaction is RNA-independent. Component of the osk RNP complex, which is composed of at least me31B, exu, yps, aret/bruno, cup, and the mRNA of osk. Component of the nanos RNP complex, which is composed of at least smg, cup, tral, me31B, the CCR4-NOT complex members Rga/NOT2 and Caf1-55, and the mRNA of nanos (nos). Interacts with tral and piRNA pathway components papi and AGO3; promotes interaction between nuage RNPs and the piRNA-mediated transposon silencing. Forms a RNP containing at least me31B, eIF4E1, cup, tral and pAbp; this interaction is required for the translational silencing of maternal mRNAs during the maternal-to-zygotic transition. In the sponge body, forms a RNP containing at least me31B, exu, yps and the mRNA of osk; interactions with exu and yps are RNA dependent. Component of a neuronal RNP, at least composed of me31B, tral and Fmr1. Component of the Atx2-Not1 repressor complex, composed of at least me31B, Atx2, tyf and pAbp. Interacts (via the C-terminus) with Atx2, tyf, pAbp and Lsm12a. Interacts (via RecA-like domain 2) with 4EHP-GYF2 complex member Gyf (via the me31B binding motif). Interacts with 4E-T, Edc3 and Patr-1. In terms of processing, symmetrically dimethylated on arginine residues. Ubiquitously expressed throughout the brain (at protein level). Expressed in the olfactory system including the antennal lobes, projection neurons, local interneurons, mushroom-body Kenyon cells and glial cells (at protein level).

It localises to the cytoplasm. Its subcellular location is the cytoplasmic ribonucleoprotein granule. It is found in the P-body. The protein localises to the endoplasmic reticulum. The protein resides in the cell projection. It localises to the dendrite. It catalyses the reaction ATP + H2O = ADP + phosphate + H(+). ATP-dependent RNA helicase which is a core component of a variety of ribonucleoprotein complexes (RNPs) that play critical roles in translational repression and mRNA decapping during embryogenesis, oogenesis, neurogenesis and neurotransmission. Recruits core components and translational repressors to some RNP complexes, and mediates RNP aggregation into processing granules such as P-bodies. As part of a RNP complex containing tral, eIF4E1, cup, and pAbp, involved in RNP-mediated translational repression of maternal mRNAs during oogenesis and embryogenesis. As part of a RNP complex containing tral and the RNA localization factors exu and yps, mediates translational silencing of mRNAs such as osk/oskar and bcd/bicoid during their transport to the oocyte in order to prevent their translation until they reach their positional destinations. In neurons and possibly imaginal disks, involved in miRNA-mediated translational repression, possibly in association with components of the piRNA transposon silencing pathway. Involved in RNA localization and protein trafficking in the oocyte. As part of an ER-associated RNP containing tral, cup and yps, required for tral-dependent ER exit site formation and consequently efficient trafficking of proteins such as grk and yl through the secretory pathway. Component of neuron RNPs that mediate transport and translation of neuronal RNAs, including translation repression of synaptic transcripts in preparation for their dendritic targeting. As part of the Atx2-Not1 repressor complex promotes Not1-dependent post-transcriptional gene silencing in adult circadian pacemaker neurons in order to sustain high-amplitude circadian rhythms and Pdf cycling in a per-independent manner. Promotes the interaction between Atx2 and Not1 within the Atx2-Not1 RNP complex. Recruited to the 4EHP-GYF2 complex by Gyf, where it plays a role in 4EHP-GYF2 mediated translational repression and mRNA decay. The protein is ATP-dependent RNA helicase me31b (me31B) of Drosophila melanogaster (Fruit fly).